We begin with the raw amino-acid sequence, 137 residues long: Small ribosomal subunit protein bS16 (137 aa).

Positions 104-118 are enriched in basic and acidic residues; the sequence is ADEKKKPVLKPKTEK. Residues 104–137 form a disordered region; the sequence is ADEKKKPVLKPKTEKAAPAPEAAAPEAESTEEQA. Positions 119–130 are enriched in low complexity; the sequence is AAPAPEAAAPEA.

This sequence belongs to the bacterial ribosomal protein bS16 family.

The protein is Small ribosomal subunit protein bS16 of Clavibacter michiganensis subsp. michiganensis (strain NCPPB 382).